Consider the following 375-residue polypeptide: Succinyl-diaminopimelate desuccinylase (375 aa).

His66 serves as a coordination point for Zn(2+). The active site involves Asp68. Asp99 contacts Zn(2+). Catalysis depends on Glu133, which acts as the Proton acceptor. Residues Glu134, Glu162, and His348 each contribute to the Zn(2+) site.

It belongs to the peptidase M20A family. DapE subfamily. Homodimer. Zn(2+) is required as a cofactor. It depends on Co(2+) as a cofactor.

The enzyme catalyses N-succinyl-(2S,6S)-2,6-diaminopimelate + H2O = (2S,6S)-2,6-diaminopimelate + succinate. Its pathway is amino-acid biosynthesis; L-lysine biosynthesis via DAP pathway; LL-2,6-diaminopimelate from (S)-tetrahydrodipicolinate (succinylase route): step 3/3. Its function is as follows. Catalyzes the hydrolysis of N-succinyl-L,L-diaminopimelic acid (SDAP), forming succinate and LL-2,6-diaminopimelate (DAP), an intermediate involved in the bacterial biosynthesis of lysine and meso-diaminopimelic acid, an essential component of bacterial cell walls. In Escherichia coli O17:K52:H18 (strain UMN026 / ExPEC), this protein is Succinyl-diaminopimelate desuccinylase.